The primary structure comprises 856 residues: Dual specificity protein kinase TTK (856 aa).

The residue at position 1 (methionine 1) is an N-acetylmethionine. Phosphoserine is present on serine 7. Residue threonine 33 is modified to Phosphothreonine. Phosphoserine occurs at positions 37, 80, 281, 317, and 321. Threonine 360 carries the phosphothreonine modification. The residue at position 363 (serine 363) is a Phosphoserine. The disordered stretch occupies residues 369–392 (EETKEYQEPEVPESNQKQWQSKRK). Phosphoserine occurs at positions 393, 435, and 454. In terms of domain architecture, Protein kinase spans 524 to 790 (YSILKQIGSG…IPELLAHPYV (267 aa)). ATP is bound by residues 530-538 (IGSGGSSKV) and lysine 552. Catalysis depends on aspartate 646, which acts as the Proton acceptor. The residue at position 820 (serine 820) is a Phosphoserine. The span at 835 to 846 (YSGGESHNSSSS) shows a compositional bias: low complexity. The interval 835-856 (YSGGESHNSSSSKTFGKKREKK) is disordered.

It belongs to the protein kinase superfamily. Ser/Thr protein kinase family. In terms of assembly, interacts with TPR; the interactions occurs in a microtubule-independent manner. Interacts with MAD1L1 and MAD2L1.

The enzyme catalyses L-seryl-[protein] + ATP = O-phospho-L-seryl-[protein] + ADP + H(+). It catalyses the reaction L-threonyl-[protein] + ATP = O-phospho-L-threonyl-[protein] + ADP + H(+). It carries out the reaction L-tyrosyl-[protein] + ATP = O-phospho-L-tyrosyl-[protein] + ADP + H(+). Its activity is regulated as follows. Inhibited by the ATP-competitive kinase inhibitor, SP600125. Involved in mitotic spindle assembly checkpoint signaling, a process that delays anaphase until chromosomes are bioriented on the spindle, and in the repair of incorrect mitotic kinetochore-spindle microtubule attachments. Phosphorylates MAD1L1 to promote the mitotic spindle assembly checkpoint. Phosphorylates CDCA8/Borealin leading to enhanced AURKB activity at the kinetochore. Phosphorylates SKA3 at 'Ser-34' leading to dissociation of the SKA complex from microtubules and destabilization of microtubule-kinetochore attachments. Phosphorylates KNL1, KNTC1 and autophosphorylates. Phosphorylates MCRS1 which enhances recruitment of KIF2A to the minus end of spindle microtubules and promotes chromosome alignment. The chain is Dual specificity protein kinase TTK (TTK) from Macaca fascicularis (Crab-eating macaque).